The primary structure comprises 293 residues: DOMON domain-containing protein FRRS1L (293 aa).

Residues 1–28 (MAGQPLRRPAWVPLLLRLLLAGIAACDA) form the signal peptide. A disordered region spans residues 29–60 (SPADDSAGPGGRGPRGRARGDAGADEAVPRHD). Residues 46 to 60 (ARGDAGADEAVPRHD) are compositionally biased toward basic and acidic residues. The DOMON domain occupies 119–234 (CDYFLSYRMI…WYYLFAWGPA (116 aa)). Residues 271-291 (TFSSPFCLLLIVALTFYLLMG) form a helical membrane-spanning segment.

In terms of assembly, component of the outer core of AMPAR complex. AMPAR complex consists of an inner core made of 4 pore-forming GluA/GRIA proteins (GRIA1, GRIA2, GRIA3 and GRIA4) and 4 major auxiliary subunits arranged in a twofold symmetry. One of the two pairs of distinct binding sites is occupied either by CNIH2, CNIH3 or CACNG2, CACNG3. The other harbors CACNG2, CACNG3, CACNG4, CACNG8 or GSG1L. This inner core of AMPAR complex is complemented by outer core constituents binding directly to the GluA/GRIA proteins at sites distinct from the interaction sites of the inner core constituents. Outer core constituents include at least PRRT1, PRRT2, CKAMP44/SHISA9, FRRS1L and NRN1. The proteins of the inner and outer core serve as a platform for other, more peripherally associated AMPAR constituents. Alone or in combination, these auxiliary subunits control the gating and pharmacology of the AMPAR complex and profoundly impact their biogenesis and protein processing. In terms of tissue distribution, expressed in the brain (at protein level). In embryos expression is evident in the ventral forebrain, but a lower level is seen in the remainder of the embryos. In the adult brain, expressed in the cortex, cerebellum, hippocampus and basal ganglia.

The protein resides in the cell membrane. The protein localises to the synapse. Important modulator of glutamate signaling pathway. The polypeptide is DOMON domain-containing protein FRRS1L (Frrs1l) (Mus musculus (Mouse)).